The following is a 495-amino-acid chain: Acyltransferase abl6 (495 aa).

The active-site Proton acceptor is the histidine 171.

It belongs to the plant acyltransferase family.

In terms of biological role, acyltransferase; part of the gene cluster that mediates the biosynthesis of abscisic acid (ABA), a phytohormone that acts antagonistically toward salicylic acid (SA), jasmonic acid (JA) and ethylene (ETH) signaling, to impede plant defense responses. The first step of the pathway catalyzes the reaction from farnesyl diphosphate to alpha-ionylideneethane performed by the alpha-ionylideneethane synthase abl3 via a three-step reaction mechanism involving 2 neutral intermediates, beta-farnesene and allofarnesene. The cytochrome P450 monooxygenase abl1 might then be involved in the conversion of alpha-ionylideneethane to alpha-ionylideneacetic acid. Alpha-ionylideneacetic acid is further converted to abscisic acid in 2 steps involving the cytochrome P450 monooxygenase abl2 and the short-chain dehydrogenase/reductase abl4, via the intermediates 1'-deoxy-ABA or 1',4'-trans-diol-ABA, depending on the order of action of these 2 enzymes. Abl2 is responsible for the hydroxylation of carbon atom C-1' and abl4 might be involved in the oxidation of the C-4' carbon atom. The acyltransferase abl6 seems not essential for the biosynthesis of ABA, but it may acetylate ABA as part of the synthesis of another ABA-related molecule. This is Acyltransferase abl6 from Leptosphaeria maculans (strain JN3 / isolate v23.1.3 / race Av1-4-5-6-7-8) (Blackleg fungus).